The sequence spans 569 residues: Cytochrome P450 monooxygenase abl1 (569 aa).

Position 464 (Cys-464) interacts with heme.

It belongs to the cytochrome P450 family. Heme is required as a cofactor.

Its pathway is hormone biosynthesis. Its function is as follows. Cytochrome P450 monooxygenase; part of the gene cluster that mediates the biosynthesis of abscisic acid (ABA), a phytohormone that acts antagonistically toward salicylic acid (SA), jasmonic acid (JA) and ethylene (ETH) signaling, to impede plant defense responses. The first step of the pathway catalyzes the reaction from farnesyl diphosphate to alpha-ionylideneethane performed by the alpha-ionylideneethane synthase abl3 via a three-step reaction mechanism involving 2 neutral intermediates, beta-farnesene and allofarnesene. The cytochrome P450 monooxygenase abl1 might then be involved in the conversion of alpha-ionylideneethane to alpha-ionylideneacetic acid. Alpha-ionylideneacetic acid is further converted to abscisic acid in 2 steps involving the cytochrome P450 monooxygenase abl2 and the short-chain dehydrogenase/reductase abl4, via the intermediates 1'-deoxy-ABA or 1',4'-trans-diol-ABA, depending on the order of action of these 2 enzymes. Abl2 is responsible for the hydroxylation of carbon atom C-1' and abl4 might be involved in the oxidation of the C-4' carbon atom. The polypeptide is Cytochrome P450 monooxygenase abl1 (Leptosphaeria maculans (strain JN3 / isolate v23.1.3 / race Av1-4-5-6-7-8) (Blackleg fungus)).